The following is a 284-amino-acid chain: Bifunctional protein FolD (284 aa).

NADP(+) contacts are provided by residues 166–168 (GAS) and isoleucine 232.

It belongs to the tetrahydrofolate dehydrogenase/cyclohydrolase family. As to quaternary structure, homodimer.

It carries out the reaction (6R)-5,10-methylene-5,6,7,8-tetrahydrofolate + NADP(+) = (6R)-5,10-methenyltetrahydrofolate + NADPH. The enzyme catalyses (6R)-5,10-methenyltetrahydrofolate + H2O = (6R)-10-formyltetrahydrofolate + H(+). The protein operates within one-carbon metabolism; tetrahydrofolate interconversion. Functionally, catalyzes the oxidation of 5,10-methylenetetrahydrofolate to 5,10-methenyltetrahydrofolate and then the hydrolysis of 5,10-methenyltetrahydrofolate to 10-formyltetrahydrofolate. In Pseudomonas entomophila (strain L48), this protein is Bifunctional protein FolD.